The primary structure comprises 415 residues: Corticotropin-releasing factor receptor 1 (415 aa).

An N-terminal signal peptide occupies residues 1-23 (MARHPQLRLVKALLLLGLNPVSA). Topologically, residues 24–111 (SLQDQHCESL…CQEILNEEKK (88 aa)) are extracellular. 3 disulfide bridges follow: Cys30/Cys54, Cys44/Cys87, and Cys68/Cys102. 3 N-linked (GlcNAc...) asparagine glycosylation sites follow: Asn38, Asn78, and Asn98. The tract at residues 99–108 (YSECQEILNE) is important for peptide agonist binding. A helical transmembrane segment spans residues 112–142 (SKVHYHVAVIINYLGHCISLVALLVAFVLFL). Residues 143-149 (RLRSIRC) lie on the Cytoplasmic side of the membrane. The chain crosses the membrane as a helical span at residues 150–174 (LRNIIHWNLISAFILRNATWFVVQL). Over 175-189 (TMSPEVHQSNVGWCR) the chain is Extracellular. A disulfide bridge links Cys188 with Cys258. Residues 190–218 (LVTAAYNYFHVTNFFWMFGEGCYLHTAIV) form a helical membrane-spanning segment. At 219-225 (LTYSTDR) the chain is on the cytoplasmic side. The chain crosses the membrane as a helical span at residues 226–253 (LRKWMFICIGWGVPFPIIVAWAIGKLYY). Topologically, residues 254 to 269 (DNEKCWFGKRPGVYTD) are extracellular. Residues 270–295 (YIYQGPMILVLLINFIFLFNIVRILM) traverse the membrane as a helical segment. The tract at residues 280–290 (LLINFIFLFNI) is important for antagonist binding. Residues 296–306 (TKLRASTTSET) are Cytoplasmic-facing. The residue at position 301 (Ser301) is a Phosphoserine; by PKA. A helical membrane pass occupies residues 307 to 331 (IQYRKAVKATLVLLPLLGITYMLFF). At 332–338 (VNPGEDE) the chain is on the extracellular side. Residues 339 to 368 (VSRVVFIYFNSFLESFQGFFVSVFYCFLNS) traverse the membrane as a helical segment. The Cytoplasmic portion of the chain corresponds to 369 to 415 (EVRSAIRKRWHRWQDKHSIRARVARAMSIPTSPTRVSFHSIKQSTAV).

It belongs to the G-protein coupled receptor 2 family. In terms of assembly, heterodimer; heterodimerizes with GPER1. Interacts (via N-terminal extracellular domain) with CRH and UCN. Interacts with DLG1; this inhibits endocytosis of CRHR1 after agonist binding. In terms of processing, C-terminal Ser or Thr residues may be phosphorylated. Post-translationally, phosphorylation at Ser-301 by PKA prevents maximal coupling to Gq-protein, and thereby negatively regulates downstream signaling. In terms of tissue distribution, expressed abundantly in the pituitary, cerebral cortex, hippocampus, amygdala and cerebellum.

It localises to the cell membrane. The protein resides in the endosome. Its function is as follows. G-protein coupled receptor for CRH (corticotropin-releasing factor) and UCN (urocortin). Has high affinity for CRH and UCN. Ligand binding causes a conformation change that triggers signaling via guanine nucleotide-binding proteins (G proteins) and down-stream effectors, such as adenylate cyclase. Promotes the activation of adenylate cyclase, leading to increased intracellular cAMP levels. Inhibits the activity of the calcium channel CACNA1H. Required for normal embryonic development of the adrenal gland and for normal hormonal responses to stress. Plays a role in the response to anxiogenic stimuli. The polypeptide is Corticotropin-releasing factor receptor 1 (CRHR1) (Macaca mulatta (Rhesus macaque)).